Reading from the N-terminus, the 318-residue chain is D-alanine--D-alanine ligase (318 aa).

Residues 116–315 (KQVWQSLGLP…FEQLSLAVLA (200 aa)) form the ATP-grasp domain. 146 to 201 (MSRLGDLVMVKPAQEGSSIGMAKVSNAQQLAAAIQQAFEYDDKVLLEQFIQGSEYT) contributes to the ATP binding site. 3 residues coordinate Mg(2+): D269, E282, and N284.

Belongs to the D-alanine--D-alanine ligase family. The cofactor is Mg(2+). Mn(2+) serves as cofactor.

It localises to the cytoplasm. It catalyses the reaction 2 D-alanine + ATP = D-alanyl-D-alanine + ADP + phosphate + H(+). Its pathway is cell wall biogenesis; peptidoglycan biosynthesis. Cell wall formation. This is D-alanine--D-alanine ligase from Pseudoalteromonas atlantica (strain T6c / ATCC BAA-1087).